A 369-amino-acid chain; its full sequence is Aspartate-semialdehyde dehydrogenase (369 aa).

NADP(+) contacts are provided by residues 11-14 (RGMV), 38-39 (TS), and glutamine 75. Arginine 104 is a binding site for phosphate. Cysteine 137 (acyl-thioester intermediate) is an active-site residue. Residue glutamine 164 participates in substrate binding. NADP(+)-binding positions include 167–168 (SG) and proline 195. Residue glutamate 243 coordinates substrate. A phosphate-binding site is contributed by lysine 246. Arginine 269 lines the substrate pocket. Histidine 276 serves as the catalytic Proton acceptor. Residue glutamine 352 coordinates NADP(+).

This sequence belongs to the aspartate-semialdehyde dehydrogenase family. As to quaternary structure, homodimer.

It catalyses the reaction L-aspartate 4-semialdehyde + phosphate + NADP(+) = 4-phospho-L-aspartate + NADPH + H(+). The protein operates within amino-acid biosynthesis; L-lysine biosynthesis via DAP pathway; (S)-tetrahydrodipicolinate from L-aspartate: step 2/4. It functions in the pathway amino-acid biosynthesis; L-methionine biosynthesis via de novo pathway; L-homoserine from L-aspartate: step 2/3. It participates in amino-acid biosynthesis; L-threonine biosynthesis; L-threonine from L-aspartate: step 2/5. Its function is as follows. Catalyzes the NADPH-dependent formation of L-aspartate-semialdehyde (L-ASA) by the reductive dephosphorylation of L-aspartyl-4-phosphate. This is Aspartate-semialdehyde dehydrogenase from Buchnera aphidicola subsp. Baizongia pistaciae (strain Bp).